The chain runs to 1004 residues: Presequence protease, mitochondrial (1004 aa).

The transit peptide at 1–34 directs the protein to the mitochondrion; sequence MLRNAAAGARKAVTELSQFPKPGEKLHGFTLVRS. H84 lines the Zn(2+) pocket. The active-site Proton acceptor is the E87. H88 contacts Zn(2+). E160 is a catalytic residue. Residue E188 participates in Zn(2+) binding.

This sequence belongs to the peptidase M16 family. PreP subfamily. Monomer and homodimer; homodimerization is induced by binding of the substrate. Zn(2+) is required as a cofactor.

Its subcellular location is the mitochondrion intermembrane space. The protein resides in the mitochondrion matrix. Functionally, degrades mitochondrial transit peptides after their cleavage in the intermembrane space or in the matrix, and presequence peptides; clearance of these peptides is required to keep the presequence processing machinery running. Preferentially cleaves the N-terminal side of paired basic amino acid residues. Also degrades other unstructured peptides. May function as an ATP-dependent peptidase as opposed to a metalloendopeptidase. The protein is Presequence protease, mitochondrial (CYM1) of Gibberella zeae (strain ATCC MYA-4620 / CBS 123657 / FGSC 9075 / NRRL 31084 / PH-1) (Wheat head blight fungus).